Reading from the N-terminus, the 1284-residue chain is DNA-directed RNA polymerase subunit beta (1284 aa).

It belongs to the RNA polymerase beta chain family. In terms of assembly, the RNAP catalytic core consists of 2 alpha, 1 beta, 1 beta' and 1 omega subunit. When a sigma factor is associated with the core the holoenzyme is formed, which can initiate transcription.

It carries out the reaction RNA(n) + a ribonucleoside 5'-triphosphate = RNA(n+1) + diphosphate. Its function is as follows. DNA-dependent RNA polymerase catalyzes the transcription of DNA into RNA using the four ribonucleoside triphosphates as substrates. The polypeptide is DNA-directed RNA polymerase subunit beta (Mesoplasma florum (strain ATCC 33453 / NBRC 100688 / NCTC 11704 / L1) (Acholeplasma florum)).